Reading from the N-terminus, the 700-residue chain is Elongation factor G (700 aa).

The region spanning 8–290 (ERYRNIGISA…AVVEYLPAPT (283 aa)) is the tr-type G domain. GTP is bound by residues 17–24 (AHIDAGKT), 88–92 (DTPGH), and 142–145 (NKMD).

Belongs to the TRAFAC class translation factor GTPase superfamily. Classic translation factor GTPase family. EF-G/EF-2 subfamily.

Its subcellular location is the cytoplasm. Functionally, catalyzes the GTP-dependent ribosomal translocation step during translation elongation. During this step, the ribosome changes from the pre-translocational (PRE) to the post-translocational (POST) state as the newly formed A-site-bound peptidyl-tRNA and P-site-bound deacylated tRNA move to the P and E sites, respectively. Catalyzes the coordinated movement of the two tRNA molecules, the mRNA and conformational changes in the ribosome. The sequence is that of Elongation factor G from Haemophilus influenzae (strain PittEE).